Consider the following 66-residue polypeptide: Beta-mammal toxin Co2 (66 aa).

An LCN-type CS-alpha/beta domain is found at 1–66 (KEGYIVNYHD…VWPLPKKRCN (66 aa)). 4 disulfide bridges follow: cysteine 12–cysteine 65, cysteine 16–cysteine 41, cysteine 25–cysteine 46, and cysteine 29–cysteine 48.

In terms of tissue distribution, expressed by the venom gland.

The protein localises to the secreted. Its function is as follows. Beta toxins bind voltage-independently at site-4 of sodium channels (Nav) and shift the voltage of activation toward more negative potentials thereby affecting sodium channel activation and promoting spontaneous and repetitive firing. This toxin acts on human Nav1.1/SCN1A, Nav1.2/SCN2A, Nav1.4/SCN4A and Nav1.6/SCN8A voltage-gated sodium channels. Also, it reduces the peak of sodium currents in Nav1.5/SCN5A at all potentials. In vivo, is lethal to mice when intraperitoneally injected at a dose of 5ug. No activity is observed when injected into crickets or woodlice. The protein is Beta-mammal toxin Co2 of Centruroides ornatus (Scorpion).